A 242-amino-acid polypeptide reads, in one-letter code: Segregation and condensation protein A (242 aa).

The protein belongs to the ScpA family. As to quaternary structure, component of a cohesin-like complex composed of ScpA, ScpB and the Smc homodimer, in which ScpA and ScpB bind to the head domain of Smc. The presence of the three proteins is required for the association of the complex with DNA.

The protein resides in the cytoplasm. Its function is as follows. Participates in chromosomal partition during cell division. May act via the formation of a condensin-like complex containing Smc and ScpB that pull DNA away from mid-cell into both cell halves. This is Segregation and condensation protein A from Lactococcus lactis subsp. lactis (strain IL1403) (Streptococcus lactis).